A 496-amino-acid polypeptide reads, in one-letter code: Pyrrole-2-carboxylic acid decarboxylase (496 aa).

W166 lines the K(+) pocket. Positions 168, 170, 187, and 188 each coordinate prenylated FMN. H188 is a binding site for Mn(2+). Residues A218, A219, M221, and E229 each contribute to the K(+) site. A prenylated FMN-binding site is contributed by E229. E229 contacts Mn(2+). The active-site Proton donor is the E278. A prenylated FMN-binding site is contributed by H386.

This sequence belongs to the UbiD family. UbiD-like/FDC subfamily. In terms of assembly, homodimer. Prenylated FMN serves as cofactor. Requires Mn(2+) as cofactor. It depends on K(+) as a cofactor.

It carries out the reaction pyrrole-2-carboxylate + H(+) = 1H-pyrrole + CO2. It catalyses the reaction pyrrole-2-carboxylate + H2O = 1H-pyrrole + hydrogencarbonate. With respect to regulation, imidazole acts as a reversible inhibitor via the formation of an imidazole-prenyl-FMN adduct. Activity is light sensitive. In terms of biological role, catalyzes the prenyl-FMN-dependent decarboxylation of pyrrole-2-carboxylate (P2C). Can also catalyze the carboxylation of pyrrole in the presence of elevated concentrations of CO(2) or bicarbonate. Can accept a modest range of heteroaromatic compounds such as 3-methylpyrrole-2-carboxylate, indole-3-carboxylate and furan-2-carboxylate, and shows very low activity with thiophene-2-carboxylate. Attenuates the virulence of P.aeruginosa in a Drosophila model when overexpressed. This is Pyrrole-2-carboxylic acid decarboxylase from Pseudomonas aeruginosa (strain ATCC 15692 / DSM 22644 / CIP 104116 / JCM 14847 / LMG 12228 / 1C / PRS 101 / PAO1).